We begin with the raw amino-acid sequence, 610 residues long: DNA mismatch repair protein MutL (610 aa).

It belongs to the DNA mismatch repair MutL/HexB family.

In terms of biological role, this protein is involved in the repair of mismatches in DNA. It is required for dam-dependent methyl-directed DNA mismatch repair. May act as a 'molecular matchmaker', a protein that promotes the formation of a stable complex between two or more DNA-binding proteins in an ATP-dependent manner without itself being part of a final effector complex. The sequence is that of DNA mismatch repair protein MutL from Rickettsia rickettsii (strain Iowa).